The following is a 3598-amino-acid chain: Dystrophin, isoforms A/C/F/G/H (3598 aa).

The segment at 1–230 is actin-binding; sequence MEPGILIDER…YVMCLYHAME (230 aa). Calponin-homology (CH) domains lie at 12–116 and 127–230; these read HIQK…LEFN and NGVE…HAME. Positions 233 to 297 are disordered; that stretch reads RTRQQEQEQD…SGELKTHSMR (65 aa). The span at 267–286 shows a compositional bias: polar residues; that stretch reads NDQTSLGLYTSDSAGSMEQR. 6 Spectrin repeats span residues 307-420, 423-525, 851-963, 1056-1170, 1173-1275, and 1381-1483; these read VEIS…KILM, AEFQ…KLQQ, QDFG…AIEN, SHID…LLEH, TQLG…LLEQ, and SYES…TLER. Disordered stretches follow at residues 1633 to 1696, 1716 to 1742, 1799 to 1854, 1878 to 1941, and 2204 to 2233; these read ARNT…VMPD, SLNP…SSPA, EDSD…ENTS, RDIL…EPLV, and GPRI…NEPS. Residues 1663 to 1679 show a composition bias toward low complexity; the sequence is SGESPSSAHTSSSESPT. Positions 1803-1816 are enriched in basic and acidic residues; it reads SSVRVDSQGKEMRR. Phosphoserine is present on residues Ser-1832 and Ser-1838. Acidic residues predominate over residues 1834–1843; it reads NDEDSAEQEE. Positions 1878-1893 are enriched in basic and acidic residues; the sequence is RDILRDSEEEEPKTPD. A compositionally biased stretch (polar residues) spans 2218–2233; sequence SAATMSCRSEYNNEPS. 5 Spectrin repeats span residues 2237–2363, 2366–2472, 2475–2576, 2579–2712, and 2715–2819; these read ALAG…QLKN, SDSQ…QLHA, HSLQ…RLES, EHWN…RLDE, and TKMR…VLCQ. The tract at residues 2655–2679 is disordered; sequence VSDTSDTEANHDSDSRYMSAEEQSR. The segment at 2822-2852 is disordered; that stretch reads AQQTHENGDDGRTTSNSGTIGPLPNLGQSVK. Positions 2849–2882 constitute a WW domain; the sequence is QSVKPPWERATTAANVPYYIDHERETTHWDHPEM. The ZZ-type zinc-finger motif lies at 3107 to 3163; the sequence is KHQAKCNICKEYPIVGFRYRCLKCFNFDMCQKCFFFGRNAKNHKLTHPMHEYCTTTT. 8 residues coordinate Zn(2+): Cys-3112, Cys-3115, Cys-3127, Cys-3130, Cys-3136, Cys-3139, His-3149, and His-3153. Ser-3207 bears the Phosphoserine mark. Disordered regions lie at residues 3316–3344, 3387–3449, 3483–3545, and 3560–3598; these read EQSG…GEQG, DEPN…KGIM, LHQQ…QQHL, and ELES…ELQK. Composition is skewed to polar residues over residues 3325 to 3337 and 3408 to 3439; these read NGMQ…MTGL and ALNS…QQNG. Residues 3485 to 3499 are compositionally biased toward low complexity; sequence QQQQQQLQQQPPQQQ. Residues 3505–3523 show a composition bias toward gly residues; sequence GNGGMDISGGMQTSGGYLG. Positions 3534 to 3545 are enriched in low complexity; it reads SSLMQQQHQQHL. Acidic residues predominate over residues 3560 to 3570; it reads ELESINDDLED. The span at 3571-3589 shows a compositional bias: low complexity; that stretch reads SSSSNTTNTTTTTTTTATT.

Component of the dystrophin associated protein complex (DAPC). Interacts with Dg, via the Dg WW domain binding sites. As to expression, isoform A, isoform F and isoform G are expressed in the midgut endoderm of stage 12 embryos. In stage 16 embryos, expression is also seen in the pericardial cells, cells at the ectoderm segmental border and cells along the midline of the CNS. During embryogenesis, isoform A is also expressed in the visceral mesoderm, muscle attachment sites, mesectodermal cells at the midline, the gut, and throughout muscle fibers. In larvae, isoform A is found in all muscle fibers, but not detectable in the brain or neuropil.

It localises to the cell membrane. It is found in the sarcolemma. Its subcellular location is the cytoplasm. The protein resides in the cytoskeleton. In terms of biological role, required for the maintenance of appropriate synaptic retrograde communication and the stabilization of muscle cell architecture or physiology. Both det and Dg are required for maintenance of early dpp signaling in the presumptive crossvein. Isoform A is not required to maintain muscle integrity, but plays a role in neuromuscular homeostasis by regulating neurotransmitter release. May play a role in anchoring the cytoskeleton to the plasma membrane. The sequence is that of Dystrophin, isoforms A/C/F/G/H (Dys) from Drosophila melanogaster (Fruit fly).